Here is a 216-residue protein sequence, read N- to C-terminus: Refilin-B (216 aa).

Residues 1-55 (MVGRLSLQDVPELVDTKKKGDGVLDSPDSGLPPSPSPSHWGLAATAGGGGERAPV) are disordered. A phosphoserine mark is found at S6 and S26.

It belongs to the Refilin family. Interacts with FLNA and FLNB. As to expression, detected in various tissues, with highest expression in lung, followed by spleen.

Its subcellular location is the cytoplasm. It localises to the cytoskeleton. Its function is as follows. Involved in the regulation of the perinuclear actin network and nuclear shape through interaction with filamins. Plays an essential role in the formation of cartilaginous skeletal elements. This chain is Refilin-B, found in Mus musculus (Mouse).